Consider the following 602-residue polypeptide: Elongation factor 4 (602 aa).

The tr-type G domain maps to 2-184 (NHIRNFSIIA…QIVAKVPAPR (183 aa)). GTP is bound by residues 14–19 (DHGKST) and 131–134 (NKMD).

The protein belongs to the TRAFAC class translation factor GTPase superfamily. Classic translation factor GTPase family. LepA subfamily.

It is found in the cell inner membrane. It carries out the reaction GTP + H2O = GDP + phosphate + H(+). Functionally, required for accurate and efficient protein synthesis under certain stress conditions. May act as a fidelity factor of the translation reaction, by catalyzing a one-codon backward translocation of tRNAs on improperly translocated ribosomes. Back-translocation proceeds from a post-translocation (POST) complex to a pre-translocation (PRE) complex, thus giving elongation factor G a second chance to translocate the tRNAs correctly. Binds to ribosomes in a GTP-dependent manner. This chain is Elongation factor 4, found in Acidovorax ebreus (strain TPSY) (Diaphorobacter sp. (strain TPSY)).